The chain runs to 117 residues: Putative membrane protein insertion efficiency factor (117 aa).

It belongs to the UPF0161 family.

The protein resides in the cell inner membrane. Functionally, could be involved in insertion of integral membrane proteins into the membrane. This Helicobacter pylori (strain ATCC 700392 / 26695) (Campylobacter pylori) protein is Putative membrane protein insertion efficiency factor.